The sequence spans 388 residues: Formate-dependent phosphoribosylglycinamide formyltransferase (388 aa).

Residues 20 to 21 (EL) and glutamate 80 each bind N(1)-(5-phospho-beta-D-ribosyl)glycinamide. ATP contacts are provided by residues arginine 112, lysine 153, 158–163 (SSGKGQ), 193–196 (EEFI), and glutamate 201. Residues 117–306 (RLAFEKLGLR…EFEIHARAIL (190 aa)) enclose the ATP-grasp domain. Glutamate 265 and glutamate 277 together coordinate Mg(2+). N(1)-(5-phospho-beta-D-ribosyl)glycinamide-binding positions include aspartate 284, lysine 352, and 359 to 360 (RR).

It belongs to the PurK/PurT family. As to quaternary structure, homodimer.

It carries out the reaction N(1)-(5-phospho-beta-D-ribosyl)glycinamide + formate + ATP = N(2)-formyl-N(1)-(5-phospho-beta-D-ribosyl)glycinamide + ADP + phosphate + H(+). It functions in the pathway purine metabolism; IMP biosynthesis via de novo pathway; N(2)-formyl-N(1)-(5-phospho-D-ribosyl)glycinamide from N(1)-(5-phospho-D-ribosyl)glycinamide (formate route): step 1/1. Involved in the de novo purine biosynthesis. Catalyzes the transfer of formate to 5-phospho-ribosyl-glycinamide (GAR), producing 5-phospho-ribosyl-N-formylglycinamide (FGAR). Formate is provided by PurU via hydrolysis of 10-formyl-tetrahydrofolate. The sequence is that of Formate-dependent phosphoribosylglycinamide formyltransferase from Methanococcus maripaludis (strain C7 / ATCC BAA-1331).